The chain runs to 396 residues: KiSS-1 receptor (396 aa).

Over 1 to 46 the chain is Extracellular; that stretch reads MAAEATLGPNVSWWAPSNASGCPGCGVNASDGPGSAPRPLDAWLVP. N-linked (GlcNAc...) asparagine glycans are attached at residues Asn-10, Asn-18, and Asn-28. The chain crosses the membrane as a helical span at residues 47–67; it reads LFFAALMLLGLVGNSLVIFVI. Over 68-90 the chain is Cytoplasmic; that stretch reads CRHKHMQTVTNFYIANLAATDVT. The chain crosses the membrane as a helical span at residues 91–111; that stretch reads FLLCCVPFTALLYPLPTWVLG. Topologically, residues 112–120 are extracellular; the sequence is DFMCKFVNY. A disulfide bridge links Cys-115 with Cys-191. The helical transmembrane segment at 121–138 threads the bilayer; that stretch reads IQQVSVQATCATLTAMSV. The Cytoplasmic portion of the chain corresponds to 139–159; that stretch reads DRWYVTVFPLRALHRRTPRLA. The chain crosses the membrane as a helical span at residues 160-180; sequence LTVSLSIWVGSAAVSAPVLAL. Residues 181–202 lie on the Extracellular side of the membrane; sequence HRLSPGPHTYCSEAFPSRALER. The chain crosses the membrane as a helical span at residues 203-223; it reads AFALYNLLALYLLPLLATCAC. The Cytoplasmic portion of the chain corresponds to 224–264; sequence YGAMLRHLGRAAVRPAPTDGALQGQLLAQRAGAVRTKVSRL. A helical membrane pass occupies residues 265–285; sequence VAAVVLLFAACWGPIQLFLVL. Residues 286 to 305 are Extracellular-facing; sequence QALGPSGAWHPRSYAAYALK. The chain crosses the membrane as a helical span at residues 306–326; that stretch reads IWAHCMSYSNSALNPLLYAFL. The Cytoplasmic segment spans residues 327–396; sequence GSHFRQAFCR…SVQDEHTAPL (70 aa). The disordered stretch occupies residues 346–396; the sequence is RRPHASAHSDRAAPHSVPHSRAAHPVRVRTPEPGNPVRRSPSVQDEHTAPL.

This sequence belongs to the G-protein coupled receptor 1 family. In terms of tissue distribution, highest expression levels in the cerebrum and cecum. Moderate expression in the ovary, colon and placenta. Low levels in the uterus, small intestine, and thymus. Expressed only moderately in the placenta. No expression in kidney tissues. Has a complex and abundant central nervous system expression pattern. Expressed in brain regions such as pons, midbrain, thalamus, hypothalamus, hippocampus, amygdala, cortex, frontal cortex, and striatum. No expression in the cerebellum. Persistent expression is detected in hypothalamus throughout postnatal development, with maximum expression levels at puberty in both male and female. Hypothalamic expression changed throughout the estrus cycle and is significantly increased after gonadectomy, a rise that is prevented by sex steroid replacement both in males and females.

It localises to the cell membrane. Its function is as follows. Receptor for metastin, a C-terminally amidated peptide of KiSS1. KiSS1 is a metastasis suppressor protein. Activation of the receptor inhibits cell proliferation and cell migration, key characteristics of tumor metastasis. The receptor is essential for normal gonadotropin-released hormone physiology and for puberty. The hypothalamic KiSS1/KISS1R system is a pivotal factor in central regulation of the gonadotropic axis at puberty and in adulthood. Analysis of the transduction pathways activated by the receptor identifies coupling to phospholipase C and intracellular calcium release through pertussis toxin-insensitive G(q) proteins. The sequence is that of KiSS-1 receptor (Kiss1r) from Rattus norvegicus (Rat).